A 335-amino-acid polypeptide reads, in one-letter code: Nuclear transcription factor Y subunit gamma (335 aa).

The protein belongs to the NFYC/HAP5 subunit family. Heterotrimeric transcription factor composed of three components, NF-YA, NF-YB and NF-YC. NF-YB and NF-YC must interact and dimerize for NF-YA association and DNA binding.

It is found in the nucleus. Functionally, component of the sequence-specific heterotrimeric transcription factor (NF-Y) which specifically recognizes a 5'-CCAAT-3' box motif found in the promoters of its target genes. NF-Y can function as both an activator and a repressor, depending on its interacting cofactors. This is Nuclear transcription factor Y subunit gamma (Nfyc) from Rattus norvegicus (Rat).